Consider the following 346-residue polypeptide: 3-keto-steroid reductase ERG27 (346 aa).

L19, T42, and K48 together coordinate NADP(+). Catalysis depends on proton donor residues S182 and Y205. 3 residues coordinate NADP(+): Y205, K209, and S241. K209 serves as the catalytic Lowers pKa of active site Tyr. Residues 242–262 (FSFFQYLNVFTYYGMLFLFYL) traverse the membrane as a helical segment. A glycan (N-linked (GlcNAc...) asparagine) is linked at N272.

The protein belongs to the short-chain dehydrogenases/reductases (SDR) family. ERG27 subfamily. As to quaternary structure, heterotetramer of ERG25, ERG26, ERG27 and ERG28. ERG28 acts as a scaffold to tether ERG27 and other 4,4-demethylation-related enzymes, forming a demethylation enzyme complex, in the endoplasmic reticulum. Interacts with ERG25 and ERG28. Also interacts with ERG7, but only in lipid particles.

The protein resides in the endoplasmic reticulum membrane. Its subcellular location is the lipid droplet. It catalyses the reaction 3-dehydro-4alpha-methylzymosterol + NADPH + H(+) = 4alpha-methylzymosterol + NADP(+). Its pathway is steroid biosynthesis; zymosterol biosynthesis; zymosterol from lanosterol: step 5/6. Functionally, 3-keto-steroid reductase; part of the third module of ergosterol biosynthesis pathway that includes the late steps of the pathway. ERG27 is a catalytic component of the C-4 demethylation complex that catalyzes the reduction of the keto group on the C-3. The third module or late pathway involves the ergosterol synthesis itself through consecutive reactions that mainly occur in the endoplasmic reticulum (ER) membrane. Firstly, the squalene synthase ERG9 catalyzes the condensation of 2 farnesyl pyrophosphate moieties to form squalene, which is the precursor of all steroids. Squalene synthase is crucial for balancing the incorporation of farnesyl diphosphate (FPP) into sterol and nonsterol isoprene synthesis. Secondly, the squalene epoxidase ERG1 catalyzes the stereospecific oxidation of squalene to (S)-2,3-epoxysqualene, which is considered to be a rate-limiting enzyme in steroid biosynthesis. Then, the lanosterol synthase ERG7 catalyzes the cyclization of (S)-2,3 oxidosqualene to lanosterol, a reaction that forms the sterol core. In the next steps, lanosterol is transformed to zymosterol through a complex process involving various demethylation, reduction and desaturation reactions. The lanosterol 14-alpha-demethylase ERG11 (also known as CYP51) catalyzes C14-demethylation of lanosterol to produce 4,4'-dimethyl cholesta-8,14,24-triene-3-beta-ol, which is critical for ergosterol biosynthesis. The C-14 reductase ERG24 reduces the C14=C15 double bond of 4,4-dimethyl-cholesta-8,14,24-trienol to produce 4,4-dimethyl-cholesta-8,24-dienol. 4,4-dimethyl-cholesta-8,24-dienol is substrate of the C-4 demethylation complex ERG25-ERG26-ERG27 in which ERG25 catalyzes the three-step monooxygenation required for the demethylation of 4,4-dimethyl and 4alpha-methylsterols, ERG26 catalyzes the oxidative decarboxylation that results in a reduction of the 3-beta-hydroxy group at the C-3 carbon to an oxo group, and ERG27 is responsible for the reduction of the keto group on the C-3. ERG28 has a role as a scaffold to help anchor ERG25, ERG26 and ERG27 to the endoplasmic reticulum and ERG29 regulates the activity of the iron-containing C4-methylsterol oxidase ERG25. Then, the sterol 24-C-methyltransferase ERG6 catalyzes the methyl transfer from S-adenosyl-methionine to the C-24 of zymosterol to form fecosterol. The C-8 sterol isomerase ERG2 catalyzes the reaction which results in unsaturation at C-7 in the B ring of sterols and thus converts fecosterol to episterol. The sterol-C5-desaturase ERG3 then catalyzes the introduction of a C-5 double bond in the B ring to produce 5-dehydroepisterol. The C-22 sterol desaturase ERG5 further converts 5-dehydroepisterol into ergosta-5,7,22,24(28)-tetraen-3beta-ol by forming the C-22(23) double bond in the sterol side chain. Finally, ergosta-5,7,22,24(28)-tetraen-3beta-ol is substrate of the C-24(28) sterol reductase ERG4 to produce ergosterol. Its function is as follows. Facilitates the association of ERG7 with lipid particles preventing its digestion in the endoplasmic reticulum and the lipid particles. This chain is 3-keto-steroid reductase ERG27, found in Candida albicans (strain SC5314 / ATCC MYA-2876) (Yeast).